We begin with the raw amino-acid sequence, 192 residues long: Fe/S biogenesis protein NfuA (192 aa).

[4Fe-4S] cluster-binding residues include Cys-149 and Cys-152.

It belongs to the NfuA family. As to quaternary structure, homodimer. The cofactor is [4Fe-4S] cluster.

In terms of biological role, involved in iron-sulfur cluster biogenesis. Binds a 4Fe-4S cluster, can transfer this cluster to apoproteins, and thereby intervenes in the maturation of Fe/S proteins. Could also act as a scaffold/chaperone for damaged Fe/S proteins. This chain is Fe/S biogenesis protein NfuA, found in Shewanella denitrificans (strain OS217 / ATCC BAA-1090 / DSM 15013).